The chain runs to 422 residues: Enolase (422 aa).

A (2R)-2-phosphoglycerate-binding site is contributed by Q162. The active-site Proton donor is E204. Mg(2+)-binding residues include D241, E284, and D311. (2R)-2-phosphoglycerate contacts are provided by K336, R365, S366, and K387. Catalysis depends on K336, which acts as the Proton acceptor.

Belongs to the enolase family. Component of the RNA degradosome, a multiprotein complex involved in RNA processing and mRNA degradation. Mg(2+) is required as a cofactor.

The protein localises to the cytoplasm. Its subcellular location is the secreted. It is found in the cell surface. The catalysed reaction is (2R)-2-phosphoglycerate = phosphoenolpyruvate + H2O. Its pathway is carbohydrate degradation; glycolysis; pyruvate from D-glyceraldehyde 3-phosphate: step 4/5. Functionally, catalyzes the reversible conversion of 2-phosphoglycerate (2-PG) into phosphoenolpyruvate (PEP). It is essential for the degradation of carbohydrates via glycolysis. This Legionella pneumophila (strain Lens) protein is Enolase.